A 177-amino-acid chain; its full sequence is Large ribosomal subunit protein uL6 (177 aa).

This sequence belongs to the universal ribosomal protein uL6 family. In terms of assembly, part of the 50S ribosomal subunit.

This protein binds to the 23S rRNA, and is important in its secondary structure. It is located near the subunit interface in the base of the L7/L12 stalk, and near the tRNA binding site of the peptidyltransferase center. This Salmonella newport (strain SL254) protein is Large ribosomal subunit protein uL6.